The primary structure comprises 427 residues: Extracellular superoxide dismutase [Cu-Zn] 2 (427 aa).

Residues 1 to 20 (MNKLIISLLIVLSAISIISA) form the signal peptide. Residues 21 to 406 (DYQYGYCKFG…PTETSQPGTS (386 aa)) are Extracellular-facing. N38, N57, N81, N190, and N218 each carry an N-linked (GlcNAc...) asparagine glycan. H257, H259, and H275 together coordinate Cu cation. Positions 275 and 283 each coordinate Zn(2+). N288 carries N-linked (GlcNAc...) asparagine glycosylation. Residues H292 and D295 each coordinate Zn(2+). Cu cation is bound at residue H331. N-linked (GlcNAc...) asparagine glycosylation is present at N376. The disordered stretch occupies residues 381–404 (GESTIEPSPTPSTTPTPTETSQPG). The span at 395 to 404 (PTPTETSQPG) shows a compositional bias: low complexity. The helical transmembrane segment at 407 to 426 (SYLAPFFVLILSSLISVILI) threads the bilayer. Residue L427 is a topological domain, cytoplasmic.

Belongs to the Cu-Zn superoxide dismutase family. The cofactor is Cu cation. Zn(2+) is required as a cofactor.

Its subcellular location is the cell membrane. The enzyme catalyses 2 superoxide + 2 H(+) = H2O2 + O2. In terms of biological role, protect the extracellular space from toxic effect of reactive oxygen intermediates by converting superoxyde radicals into hydrogen peroxyde and oxygen. The polypeptide is Extracellular superoxide dismutase [Cu-Zn] 2 (sodB) (Dictyostelium discoideum (Social amoeba)).